The primary structure comprises 130 residues: 3-hydroxyisobutyrate dehydrogenase, mitochondrial (130 aa).

NAD(+) contacts are provided by residues 1 to 17 (TPVG…PMAK), 25 to 26 (LP), and asparagine 30. N6-acetyllysine is present on lysine 43. N6-acetyllysine; alternate is present on lysine 47. Lysine 47 carries the post-translational modification N6-succinyllysine; alternate. At lysine 101 the chain carries N6-succinyllysine.

Belongs to the HIBADH-related family. 3-hydroxyisobutyrate dehydrogenase subfamily. Homodimer.

The protein localises to the mitochondrion. The enzyme catalyses 3-hydroxy-2-methylpropanoate + NAD(+) = 2-methyl-3-oxopropanoate + NADH + H(+). The protein operates within amino-acid degradation; L-valine degradation. This is 3-hydroxyisobutyrate dehydrogenase, mitochondrial from Mesocricetus auratus (Golden hamster).